Here is a 179-residue protein sequence, read N- to C-terminus: Ribosome maturation factor RimM (179 aa).

The 79-residue stretch at 101–179 folds into the PRC barrel domain; the sequence is EGEVYVHDLC…VELMHRWILE (79 aa).

The protein belongs to the RimM family. Binds ribosomal protein uS19.

The protein localises to the cytoplasm. An accessory protein needed during the final step in the assembly of 30S ribosomal subunit, possibly for assembly of the head region. Essential for efficient processing of 16S rRNA. May be needed both before and after RbfA during the maturation of 16S rRNA. It has affinity for free ribosomal 30S subunits but not for 70S ribosomes. This Treponema denticola (strain ATCC 35405 / DSM 14222 / CIP 103919 / JCM 8153 / KCTC 15104) protein is Ribosome maturation factor RimM.